A 207-amino-acid polypeptide reads, in one-letter code: Dephospho-CoA kinase (207 aa).

The region spanning 10 to 207 (ILGLTGGIGS…FYLTLSGGQS (198 aa)) is the DPCK domain. 18 to 23 (GSGKSA) is an ATP binding site.

It belongs to the CoaE family.

The protein resides in the cytoplasm. The enzyme catalyses 3'-dephospho-CoA + ATP = ADP + CoA + H(+). Its pathway is cofactor biosynthesis; coenzyme A biosynthesis; CoA from (R)-pantothenate: step 5/5. In terms of biological role, catalyzes the phosphorylation of the 3'-hydroxyl group of dephosphocoenzyme A to form coenzyme A. This Pseudomonas fluorescens (strain Pf0-1) protein is Dephospho-CoA kinase.